Consider the following 132-residue polypeptide: Phosphoribosyl-AMP cyclohydrolase (132 aa).

D76 lines the Mg(2+) pocket. Zn(2+) is bound at residue C77. Mg(2+) contacts are provided by D78 and D80. Zn(2+) contacts are provided by C93 and C100.

The protein belongs to the PRA-CH family. Homodimer. Mg(2+) is required as a cofactor. The cofactor is Zn(2+).

Its subcellular location is the cytoplasm. It catalyses the reaction 1-(5-phospho-beta-D-ribosyl)-5'-AMP + H2O = 1-(5-phospho-beta-D-ribosyl)-5-[(5-phospho-beta-D-ribosylamino)methylideneamino]imidazole-4-carboxamide. The protein operates within amino-acid biosynthesis; L-histidine biosynthesis; L-histidine from 5-phospho-alpha-D-ribose 1-diphosphate: step 3/9. Its function is as follows. Catalyzes the hydrolysis of the adenine ring of phosphoribosyl-AMP. The sequence is that of Phosphoribosyl-AMP cyclohydrolase from Methanobrevibacter smithii (strain ATCC 35061 / DSM 861 / OCM 144 / PS).